A 471-amino-acid polypeptide reads, in one-letter code: Glutamate--tRNA ligase (471 aa).

A 'HIGH' region motif is present at residues 9–19; the sequence is PSPTGYLHVGG. 4 residues coordinate Zn(2+): cysteine 98, cysteine 100, cysteine 125, and histidine 127. The short motif at 237–241 is the 'KMSKS' region element; sequence KLSKR. Residue lysine 240 coordinates ATP.

Belongs to the class-I aminoacyl-tRNA synthetase family. Glutamate--tRNA ligase type 1 subfamily. In terms of assembly, monomer. Zn(2+) serves as cofactor.

The protein resides in the cytoplasm. It catalyses the reaction tRNA(Glu) + L-glutamate + ATP = L-glutamyl-tRNA(Glu) + AMP + diphosphate. Catalyzes the attachment of glutamate to tRNA(Glu) in a two-step reaction: glutamate is first activated by ATP to form Glu-AMP and then transferred to the acceptor end of tRNA(Glu). The polypeptide is Glutamate--tRNA ligase (Salmonella dublin (strain CT_02021853)).